Reading from the N-terminus, the 340-residue chain is Fructose-1,6-bisphosphatase class 1 (340 aa).

4 residues coordinate Mg(2+): E107, D126, L128, and D129. N215 contacts substrate. E287 lines the Mg(2+) pocket.

Belongs to the FBPase class 1 family. As to quaternary structure, homotetramer. Mg(2+) serves as cofactor.

It is found in the cytoplasm. It carries out the reaction beta-D-fructose 1,6-bisphosphate + H2O = beta-D-fructose 6-phosphate + phosphate. It participates in carbohydrate biosynthesis; gluconeogenesis. The protein is Fructose-1,6-bisphosphatase class 1 of Brucella suis biovar 1 (strain 1330).